The chain runs to 395 residues: Elongation factor Tu (395 aa).

The 195-residue stretch at 10 to 204 (KPHLNIGTIG…AVDNWIEEPV (195 aa)) folds into the tr-type G domain. The interval 19 to 26 (GHVDHGKT) is G1. 19–26 (GHVDHGKT) contacts GTP. Threonine 26 serves as a coordination point for Mg(2+). Residues 60–64 (GITIN) form a G2 region. The G3 stretch occupies residues 81 to 84 (DCPG). Residues 81–85 (DCPGH) and 136–139 (NKVD) contribute to the GTP site. Residues 136-139 (NKVD) are G4. The segment at 174–176 (SAL) is G5.

Belongs to the TRAFAC class translation factor GTPase superfamily. Classic translation factor GTPase family. EF-Tu/EF-1A subfamily. In terms of assembly, monomer.

The protein localises to the cytoplasm. The enzyme catalyses GTP + H2O = GDP + phosphate + H(+). GTP hydrolase that promotes the GTP-dependent binding of aminoacyl-tRNA to the A-site of ribosomes during protein biosynthesis. The polypeptide is Elongation factor Tu (Flavobacterium johnsoniae (strain ATCC 17061 / DSM 2064 / JCM 8514 / BCRC 14874 / CCUG 350202 / NBRC 14942 / NCIMB 11054 / UW101) (Cytophaga johnsonae)).